The sequence spans 192 residues: Ion-translocating oxidoreductase complex subunit B (192 aa).

Residues 1-26 are hydrophobic; it reads MNTIWIAVGALTLLGLVFGAILGYAS. The region spanning 32-91 is the 4Fe-4S domain; the sequence is EDDPVVEKIDAILPQSQCGQCGYPGCRPYAEAVGLQGEKINRCAPGGEAVMLKMAELLNV. 12 residues coordinate [4Fe-4S] cluster: cysteine 49, cysteine 52, cysteine 57, cysteine 74, cysteine 117, cysteine 120, cysteine 123, cysteine 127, cysteine 147, cysteine 150, cysteine 153, and cysteine 157. 2 consecutive 4Fe-4S ferredoxin-type domains span residues 108–137 and 138–167; these read MLAVIDENNCIGCTKCIQACPVDAIVGATR and AMHTVMSDLCTGCNLCVDPCPTHCIELRPV.

Belongs to the 4Fe4S bacterial-type ferredoxin family. RnfB subfamily. In terms of assembly, the complex is composed of six subunits: RsxA, RsxB, RsxC, RsxD, RsxE and RsxG. The cofactor is [4Fe-4S] cluster.

It is found in the cell inner membrane. Its function is as follows. Part of a membrane-bound complex that couples electron transfer with translocation of ions across the membrane. Required to maintain the reduced state of SoxR. The polypeptide is Ion-translocating oxidoreductase complex subunit B (Salmonella agona (strain SL483)).